We begin with the raw amino-acid sequence, 124 residues long: Pal-related lipoprotein (124 aa).

An N-terminal signal peptide occupies residues 1-18 (MRYRAVFPMLIIVFALSG). The N-palmitoyl cysteine moiety is linked to residue cysteine 19. A lipid anchor (S-diacylglycerol cysteine) is attached at cysteine 19.

Its subcellular location is the cell membrane. The sequence is that of Pal-related lipoprotein (slp) from Bacillus subtilis (strain 168).